Consider the following 214-residue polypeptide: Probable transaldolase (214 aa).

The active-site Schiff-base intermediate with substrate is the K83.

The protein belongs to the transaldolase family. Type 3B subfamily.

The protein localises to the cytoplasm. The catalysed reaction is D-sedoheptulose 7-phosphate + D-glyceraldehyde 3-phosphate = D-erythrose 4-phosphate + beta-D-fructose 6-phosphate. The protein operates within carbohydrate degradation; pentose phosphate pathway; D-glyceraldehyde 3-phosphate and beta-D-fructose 6-phosphate from D-ribose 5-phosphate and D-xylulose 5-phosphate (non-oxidative stage): step 2/3. Its function is as follows. Transaldolase is important for the balance of metabolites in the pentose-phosphate pathway. The chain is Probable transaldolase from Geotalea uraniireducens (strain Rf4) (Geobacter uraniireducens).